The sequence spans 979 residues: Ankycorbin (979 aa).

At Met-1 the chain carries N-acetylmethionine. Ser-11 carries the phosphoserine modification. ANK repeat units follow at residues 18-51, 52-81, 85-114, 118-147, 151-180, 184-213, and 217-247; these read KNDD…KHDS, EGKT…DVTA, SGHS…PAEN, SGKT…PINL, DGNI…DVNS, NGRT…DLSL, and LGHN…DADL. Residues 247–259 show a composition bias toward basic and acidic residues; the sequence is LKTPTKPKQHDQV. Positions 247 to 299 are disordered; the sequence is LKTPTKPKQHDQVSKISSERSGTPKKRKAPPPPISPTQLSDVSSPRSITSTPL. Thr-249 carries the phosphothreonine modification. The Nuclear localization signal motif lies at 270–276; the sequence is PKKRKAP. Ser-281, Ser-286, and Ser-293 each carry phosphoserine. The span at 282 to 299 shows a compositional bias: polar residues; it reads PTQLSDVSSPRSITSTPL. Residues Thr-295 and Thr-297 each carry the phosphothreonine modification. A phosphoserine mark is found at Ser-300, Ser-304, Ser-318, Ser-327, Ser-329, Ser-340, Ser-341, and Ser-358. Residues 349-374 are a coiled coil; that stretch reads LVLLQAKVASLTLHNKELQDKLQAKS. Disordered stretches follow at residues 392–429 and 446–467; these read TQTD…TDND and LESS…RTDT. Residues 430–943 are a coiled coil; that stretch reads VIIRQLQDSL…CKKHHQEVIS (514 aa). Basic and acidic residues predominate over residues 446–457; it reads LESSEAEKKQLQ. Over residues 458 to 467 the composition is skewed to polar residues; sequence DELQSQRTDT. Residues Ser-513, Ser-516, Ser-667, Ser-694, and Ser-914 each carry the phosphoserine modification.

In terms of assembly, interacts with PALLD. Associates with actin. However, does not bind F-actin directly. In terms of tissue distribution, highly expressed in testis, where it localizes to seminiferous tubules (at protein level). Expressed in ganglion cell layer and in Muller cell fibers of the retina (at protein level). In small intestine highly expressed at the apical and lateral borders of absorptive epithelia (at protein level). In liver highly expressed along the bile canaliculi (at protein level).

It is found in the cytoplasm. The protein resides in the cytoskeleton. It localises to the stress fiber. Its subcellular location is the cell cortex. The protein localises to the cell junction. It is found in the nucleus. Its function is as follows. Plays a role in actin regulation at the ectoplasmic specialization, a type of cell junction specific to testis. Important for establishment of sperm polarity and normal spermatid adhesion. May also promote integrity of Sertoli cell tight junctions at the blood-testis barrier. This Mus musculus (Mouse) protein is Ankycorbin (Rai14).